Reading from the N-terminus, the 343-residue chain is Phospholipid phosphatase-related protein type 2 (343 aa).

A run of 3 helical transmembrane segments spans residues 12–32 (FSII…VVLL), 72–92 (ALIY…GELA), and 129–149 (FLGV…AGQV). A glycan (N-linked (GlcNAc...) asparagine) is linked at Asn-165. 3 helical membrane-spanning segments follow: residues 210 to 230 (AALC…VFRV), 239 to 259 (SLCL…VAEY), and 266 to 286 (VLAG…CVVH). The interval 291 to 343 (RPHSGRRLSPWEDLSQAPTMDSPLEKNPRPAGRIRHRHGSPHPSRRTVPAVAT) is disordered. Phosphoserine occurs at positions 299 and 312. Residues 322–335 (GRIRHRHGSPHPSR) show a composition bias toward basic residues.

The protein belongs to the PA-phosphatase related phosphoesterase family.

It is found in the membrane. This chain is Phospholipid phosphatase-related protein type 2, found in Mus musculus (Mouse).